The following is a 114-amino-acid chain: Fructose-bisphosphate aldolase 2 (114 aa).

35–38 lines the dihydroxyacetone phosphate pocket; that stretch reads NIDT.

Belongs to the class II fructose-bisphosphate aldolase family. Homodimer. Zn(2+) is required as a cofactor.

The enzyme catalyses beta-D-fructose 1,6-bisphosphate = D-glyceraldehyde 3-phosphate + dihydroxyacetone phosphate. The protein operates within carbohydrate biosynthesis; Calvin cycle. It participates in carbohydrate degradation; glycolysis; D-glyceraldehyde 3-phosphate and glycerone phosphate from D-glucose: step 4/4. Its function is as follows. Catalyzes the aldol condensation of dihydroxyacetone phosphate (DHAP or glycerone-phosphate) with glyceraldehyde 3-phosphate (G3P) to form fructose 1,6-bisphosphate (FBP) in gluconeogenesis and the reverse reaction in glycolysis. The sequence is that of Fructose-bisphosphate aldolase 2 (cbbA) from Rhodobacter capsulatus (Rhodopseudomonas capsulata).